A 170-amino-acid polypeptide reads, in one-letter code: RNA pyrophosphohydrolase (170 aa).

Residues 6-149 (GFRPNVGIVI…KRDVYRRALK (144 aa)) enclose the Nudix hydrolase domain. Positions 38 to 59 (GGIDDGETPEQAMYRELYEEVG) match the Nudix box motif.

Belongs to the Nudix hydrolase family. RppH subfamily. The cofactor is a divalent metal cation.

Functionally, accelerates the degradation of transcripts by removing pyrophosphate from the 5'-end of triphosphorylated RNA, leading to a more labile monophosphorylated state that can stimulate subsequent ribonuclease cleavage. This chain is RNA pyrophosphohydrolase, found in Aliivibrio fischeri (strain ATCC 700601 / ES114) (Vibrio fischeri).